The chain runs to 524 residues: Na(+)/H(+) antiporter NhaB (524 aa).

9 helical membrane-spanning segments follow: residues 13–33 (FLGNSPDWYKLAIMGFLIINP), 98–118 (LLLVFMVAGIYFMKQLLLFVF), 140–160 (AFLSAFLDALTVIAVVISVSV), 239–259 (FFIRMLPVTLPVFICGLLVCL), 304–324 (AIIGVWLVLALALHLAEVGLV), 325–345 (GLSVIILATSFCGITNEHSLG), 358–378 (LTVFFAVVAVIIEQSLFTPII), 448–468 (ATPNGQAAFLFLLTSALAPLI), and 479–499 (ALPYTLVMTIVGLLGVEFLLV).

It belongs to the NhaB Na(+)/H(+) (TC 2.A.34) antiporter family.

Its subcellular location is the cell inner membrane. The catalysed reaction is 2 Na(+)(in) + 3 H(+)(out) = 2 Na(+)(out) + 3 H(+)(in). Functionally, na(+)/H(+) antiporter that extrudes sodium in exchange for external protons. The polypeptide is Na(+)/H(+) antiporter NhaB (Yersinia pseudotuberculosis serotype O:3 (strain YPIII)).